The chain runs to 474 residues: Trigger factor (474 aa).

The region spanning glycine 174–proline 261 is the PPIase FKBP-type domain. Residues valine 435–lysine 474 form a disordered region. Residues threonine 442 to threonine 467 are compositionally biased toward low complexity.

The protein belongs to the FKBP-type PPIase family. Tig subfamily.

It localises to the cytoplasm. The catalysed reaction is [protein]-peptidylproline (omega=180) = [protein]-peptidylproline (omega=0). Its function is as follows. Involved in protein export. Acts as a chaperone by maintaining the newly synthesized protein in an open conformation. Functions as a peptidyl-prolyl cis-trans isomerase. The sequence is that of Trigger factor from Prochlorococcus marinus (strain AS9601).